A 122-amino-acid chain; its full sequence is S-protein homolog 23 (122 aa).

The N-terminal stretch at 1–20 is a signal peptide; the sequence is MQNLSILLVCSFCILGHVSS. Asn86 carries an N-linked (GlcNAc...) asparagine glycan.

Belongs to the plant self-incompatibility (S1) protein family.

Its subcellular location is the secreted. This chain is S-protein homolog 23, found in Arabidopsis thaliana (Mouse-ear cress).